The chain runs to 502 residues: MTRSLTMNSSLPAIDGLRLPHQMLIGGQWVNAQSDKTLNVYNPATGDTLTDVPDGDVEDVNAAVESAAATLQSDAWRRMPPSARERILLRLADLLEAHGDELARLETLNNGKLLIYSKMMEVGASAQWLRYMAGWATKLTGSTLDLSLPLPPDVRSRASTQRVPVGVVAAIIPWNFPLLMAVWKIAPALACGNTVVLKPAEETPLTALRLAELAMEAGLPAGALNVVTGRGETAGDALVRHPKVAKVAFTGSTEVGRIIGSACGRSLKAVSLELGGKSPVIVLADCDPQEAAEGAAAAIFFNHGQVCTAGSRLYVHESIYEDVIQRLAVIGESIVVGSGLEQGVHMGPMVSKKHHENVLRHIRNGIEDGADLICGGTEAPCAQGFFVKPTIFANREKKDIRLLSQEVFGPVLVATPFSDIAEVVNEANRSVYGLGASIWTNDLSAALRINDELEAGTVWVNTHNMVDPNLPFGGFKDSGVGREHGAAAIEHYTTTRSLVIAY.

251–256 contributes to the NAD(+) binding site; the sequence is GSTEVG. Active-site residues include glutamate 273 and cysteine 307.

The protein belongs to the aldehyde dehydrogenase family.

The catalysed reaction is 2-phenylacetaldehyde + NAD(+) + H2O = 2-phenylacetate + NADH + 2 H(+). Its pathway is aromatic compound metabolism. Its function is as follows. Phenylacetaldehyde dehydrogenase that catalyzes the last step in the aerobic styrene degradation pathway by mediating oxidation of phenylacetaldehyde to phenylacetic acid. This chain is Phenylacetaldehyde dehydrogenase (styD), found in Pseudomonas fluorescens.